Reading from the N-terminus, the 452-residue chain is UDP-N-acetylmuramoylalanine--D-glutamate ligase (452 aa).

119 to 125 (GSNGKTT) serves as a coordination point for ATP.

It belongs to the MurCDEF family.

The protein localises to the cytoplasm. The catalysed reaction is UDP-N-acetyl-alpha-D-muramoyl-L-alanine + D-glutamate + ATP = UDP-N-acetyl-alpha-D-muramoyl-L-alanyl-D-glutamate + ADP + phosphate + H(+). It participates in cell wall biogenesis; peptidoglycan biosynthesis. Its function is as follows. Cell wall formation. Catalyzes the addition of glutamate to the nucleotide precursor UDP-N-acetylmuramoyl-L-alanine (UMA). The sequence is that of UDP-N-acetylmuramoylalanine--D-glutamate ligase from Streptococcus pyogenes serotype M2 (strain MGAS10270).